A 416-amino-acid polypeptide reads, in one-letter code: UDP-N-acetylmuramoylalanine--D-glutamate ligase (416 aa).

An ATP-binding site is contributed by 104 to 110 (GSNGKST).

Belongs to the MurCDEF family.

The protein localises to the cytoplasm. The enzyme catalyses UDP-N-acetyl-alpha-D-muramoyl-L-alanine + D-glutamate + ATP = UDP-N-acetyl-alpha-D-muramoyl-L-alanyl-D-glutamate + ADP + phosphate + H(+). The protein operates within cell wall biogenesis; peptidoglycan biosynthesis. Its function is as follows. Cell wall formation. Catalyzes the addition of glutamate to the nucleotide precursor UDP-N-acetylmuramoyl-L-alanine (UMA). The sequence is that of UDP-N-acetylmuramoylalanine--D-glutamate ligase from Francisella tularensis subsp. mediasiatica (strain FSC147).